Here is a 329-residue protein sequence, read N- to C-terminus: Apolipoprotein E (329 aa).

An N-terminal signal peptide occupies residues 1–18; the sequence is MKVLWAALVVALLAGCWA. 8 consecutive repeat copies span residues 92 to 113, 114 to 135, 136 to 157, 158 to 179, 180 to 201, 202 to 223, 224 to 245, and 246 to 267. Positions 92–267 are 8 X 22 AA approximate tandem repeats; it reads TLMEETMKEI…HLDEVREQME (176 aa). M155 is subject to Methionine sulfoxide. Position 159 is a phosphoserine (S159). Residues 170-180 form an LDL and other lipoprotein receptors binding region; that stretch reads HMRKLRKRVLR. Heparin is bound at residue 174–177; that stretch reads LRKR. The tract at residues 222–302 is lipid-binding and lipoprotein association; that stretch reads HAKVDALATQ…GWFEPLVEDM (81 aa). 241–248 contacts heparin; sequence GQQLRGRL. The interval 278–329 is homooligomerization; the sequence is NQMRQQAEAFQARLKGWFEPLVEDMQRQWAVLVEKVQAAVGTSPTTPPVETK. The tract at residues 290–302 is specificity for association with VLDL; the sequence is RLKGWFEPLVEDM.

It belongs to the apolipoprotein A1/A4/E family. In terms of assembly, homotetramer. May interact with ABCA1; functionally associated with ABCA1 in the biogenesis of HDLs. May interact with APP/A4 amyloid-beta peptide; the interaction is extremely stable in vitro but its physiological significance is unclear. May interact with MAPT. May interact with MAP2. In the cerebrospinal fluid, interacts with secreted SORL1. Interacts with PMEL; this allows the loading of PMEL luminal fragment on ILVs to induce fibril nucleation. In terms of processing, APOE exists as multiple glycosylated and sialylated glycoforms within cells and in plasma. The extent of glycosylation and sialylation are tissue and context specific. Post-translationally, glycated in plasma VLDL. Phosphorylated by FAM20C in the extracellular medium.

Its subcellular location is the secreted. The protein localises to the extracellular space. It is found in the extracellular matrix. It localises to the extracellular vesicle. The protein resides in the endosome. Its subcellular location is the multivesicular body. APOE is an apolipoprotein, a protein associating with lipid particles, that mainly functions in lipoprotein-mediated lipid transport between organs via the plasma and interstitial fluids. APOE is a core component of plasma lipoproteins and is involved in their production, conversion and clearance. Apolipoproteins are amphipathic molecules that interact both with lipids of the lipoprotein particle core and the aqueous environment of the plasma. As such, APOE associates with chylomicrons, chylomicron remnants, very low density lipoproteins (VLDL) and intermediate density lipoproteins (IDL) but shows a preferential binding to high-density lipoproteins (HDL). It also binds a wide range of cellular receptors including the LDL receptor/LDLR, the LDL receptor-related proteins LRP1, LRP2 and LRP8 and the very low-density lipoprotein receptor/VLDLR that mediate the cellular uptake of the APOE-containing lipoprotein particles. Finally, APOE also has a heparin-binding activity and binds heparan-sulfate proteoglycans on the surface of cells, a property that supports the capture and the receptor-mediated uptake of APOE-containing lipoproteins by cells. A main function of APOE is to mediate lipoprotein clearance through the uptake of chylomicrons, VLDLs, and HDLs by hepatocytes. APOE is also involved in the biosynthesis by the liver of VLDLs as well as their uptake by peripheral tissues ensuring the delivery of triglycerides and energy storage in muscle, heart and adipose tissues. By participating in the lipoprotein-mediated distribution of lipids among tissues, APOE plays a critical role in plasma and tissues lipid homeostasis. APOE is also involved in two steps of reverse cholesterol transport, the HDLs-mediated transport of cholesterol from peripheral tissues to the liver, and thereby plays an important role in cholesterol homeostasis. First, it is functionally associated with ABCA1 in the biogenesis of HDLs in tissues. Second, it is enriched in circulating HDLs and mediates their uptake by hepatocytes. APOE also plays an important role in lipid transport in the central nervous system, regulating neuron survival and sprouting. This chain is Apolipoprotein E (APOE), found in Eumetopias jubatus (Steller sea lion).